We begin with the raw amino-acid sequence, 280 residues long: Ribosomal RNA small subunit methyltransferase A (280 aa).

The S-adenosyl-L-methionine site is built by His13, Leu15, Gly40, Glu61, Asp85, and Asn105.

It belongs to the class I-like SAM-binding methyltransferase superfamily. rRNA adenine N(6)-methyltransferase family. RsmA subfamily.

It is found in the cytoplasm. It catalyses the reaction adenosine(1518)/adenosine(1519) in 16S rRNA + 4 S-adenosyl-L-methionine = N(6)-dimethyladenosine(1518)/N(6)-dimethyladenosine(1519) in 16S rRNA + 4 S-adenosyl-L-homocysteine + 4 H(+). Its function is as follows. Specifically dimethylates two adjacent adenosines (A1518 and A1519) in the loop of a conserved hairpin near the 3'-end of 16S rRNA in the 30S particle. May play a critical role in biogenesis of 30S subunits. This chain is Ribosomal RNA small subunit methyltransferase A, found in Phocaeicola vulgatus (strain ATCC 8482 / DSM 1447 / JCM 5826 / CCUG 4940 / NBRC 14291 / NCTC 11154) (Bacteroides vulgatus).